Here is a 571-residue protein sequence, read N- to C-terminus: Septation ring formation regulator EzrA (571 aa).

Residues 1 to 3 (MYY) are Extracellular-facing. Residues 4 to 22 (MLIGFIIVVIAVIGAGYIL) traverse the membrane as a helical segment. The Cytoplasmic segment spans residues 23 to 571 (KRKHYQRINE…ASKVSVDDIE (549 aa)). 5 coiled-coil regions span residues 102–147 (ATNA…TKEK), 248–298 (LAQM…DTLE), 326–374 (DALA…ASGE), 400–437 (KFAE…ERER), and 478–529 (RIAE…ENHF).

Belongs to the EzrA family.

The protein resides in the cell membrane. Negative regulator of FtsZ ring formation; modulates the frequency and position of FtsZ ring formation. Inhibits FtsZ ring formation at polar sites. Interacts either with FtsZ or with one of its binding partners to promote depolymerization. In Listeria monocytogenes serotype 4a (strain HCC23), this protein is Septation ring formation regulator EzrA.